Consider the following 243-residue polypeptide: MTEGVQNERTGYKRVMLKLGGEMFGGGAVGIDPDVVQNVARQIASVARTGAEIAVVIGGGNFFRGAQLQQRGLDRNRSDYMGMLGTVMNCLALQDFLEQEGIDCRVQTAINMAQVAEPYLPLRAKRHLEKGRVVIFGAGMGMPYFSTDTTAAQRALEIDCEVLLMAKAVDGVYDDDPRTNPDAQLFHQITPREVIEKGLKVADATAFSLCMDNKMPILVFNLLTEGNIARAVAGEQIGTLVQS.

18–21 (KLGG) is an ATP binding site. Residue glycine 59 participates in UMP binding. The ATP site is built by glycine 60 and arginine 64. Residues aspartate 79 and 140 to 147 (MGMPYFST) each bind UMP. ATP-binding residues include tyrosine 173 and aspartate 176.

It belongs to the UMP kinase family. As to quaternary structure, homohexamer.

Its subcellular location is the cytoplasm. The catalysed reaction is UMP + ATP = UDP + ADP. Its pathway is pyrimidine metabolism; CTP biosynthesis via de novo pathway; UDP from UMP (UMPK route): step 1/1. Its activity is regulated as follows. Inhibited by UTP. In terms of biological role, catalyzes the reversible phosphorylation of UMP to UDP. In Corynebacterium diphtheriae (strain ATCC 700971 / NCTC 13129 / Biotype gravis), this protein is Uridylate kinase.